Reading from the N-terminus, the 1335-residue chain is Protein SPATA31F1 (1335 aa).

A helical transmembrane segment spans residues 8–28 (LWEVGYPLYIYGSIFIVIVII). Disordered stretches follow at residues 403–424 (ALKA…SGSD), 480–502 (LPKT…MSPS), 972–1002 (VQQN…SGDM), 1019–1141 (PSLE…LQDS), and 1248–1335 (ENVA…GHPT). Polar residues predominate over residues 414 to 424 (SGGQDNDSGSD). Positions 972–1000 (VQQNQKQSNSKAVPQGSAHSVSKISQPSG) are enriched in polar residues. 3 stretches are compositionally biased toward basic and acidic residues: residues 1047–1064 (NRED…REGD), 1071–1083 (STRE…EDQR), and 1129–1139 (PGEKESEKDLQ).

It belongs to the SPATA31 family.

It localises to the membrane. This Homo sapiens (Human) protein is Protein SPATA31F1.